Here is a 701-residue protein sequence, read N- to C-terminus: L-glutamate oxidase precursor (701 aa).

The first 14 residues, 1 to 14 (MTTDTARRHTGAER), serve as a signal peptide directing secretion. FAD-binding residues include Ala69, Glu88, Ala89, Arg97, Met123, Arg124, Met354, and Ser409. Residues 481 to 520 (LALPQSVRNLPTGLLGAHPSVDESRIGEEQVEYYRNSELR) constitute a propeptide that is removed on maturation. FAD is bound by residues Glu645, Trp653, and Ile654. Residues 684–701 (RRGAAAATEPMREEALTS) constitute a propeptide that is removed on maturation.

This sequence belongs to the flavin monoamine oxidase family. LGOX subfamily. As to quaternary structure, the LGOX precursor forms homodimers. The mature enzyme is a heterohexamer composed of 2 alpha chains, 2 beta chains and 2 gamma chains (alpha2beta2gamma2). The cofactor is FAD. Post-translationally, the precursor form is proteolytically cleaved by an endopeptidase into alpha, beta and gamma chains, which form the stable mature enzyme. Activation by proteolysis occurs after secretion.

The protein localises to the secreted. It catalyses the reaction L-glutamate + O2 + H2O = H2O2 + 2-oxoglutarate + NH4(+). With respect to regulation, produced as a single polypeptide precursor and is activated by proteolytic cleavage. The LGOX precursor is an active enzyme, but it exhibits lower catalytic efficiency and lower thermostability compared with the mature hexameric LGOX. The mature form is strongly inhibited by p-chloromercuribenzoate, but not by CuCl(2), EDTA and diethyldithiocarbamate. Functionally, catalyzes the oxidative deamination of L-glutamate to 2-ketoglutarate along with the production of ammonia and hydrogen peroxide. Shows strict substrate specificity for L-glutamate, and exhibits only very weak activity with L-aspartate. The polypeptide is L-glutamate oxidase precursor (Streptomyces sp).